Consider the following 143-residue polypeptide: MAGFLMKQMVGNQLNEVTGGLGLKDDGGEKTETGEDPEVVAARLEQEERRKEKHRKMEQEREKMRQGIRDKYAIKKKEEGVAMDFTEGRIGGPRKTPEEIAAEMNAEDDSIIGQLGLTEQVEKAKTMATGAFETVKGFFPFGK.

The tract at residues 15–71 (NEVTGGLGLKDDGGEKTETGEDPEVVAARLEQEERRKEKHRKMEQEREKMRQGIRDK) is disordered. Basic and acidic residues-rich tracts occupy residues 23-33 (LKDDGGEKTET) and 44-71 (LEQE…IRDK). Residues 40-71 (VAARLEQEERRKEKHRKMEQEREKMRQGIRDK) are a coiled coil.

Belongs to the complexin/synaphin family.

Its subcellular location is the cytoplasm. It is found in the cytosol. Functionally, positively regulates a late step in synaptic vesicle exocytosis. This chain is Putative complexin-1 (cpx-1), found in Caenorhabditis briggsae.